The sequence spans 67 residues: Large ribosomal subunit protein uL29 (67 aa).

The protein belongs to the universal ribosomal protein uL29 family.

This Ehrlichia ruminantium (strain Gardel) protein is Large ribosomal subunit protein uL29.